A 589-amino-acid chain; its full sequence is Probable translation initiation factor IF-2 (589 aa).

One can recognise a tr-type G domain in the interval 14–229; it reads LRQPIVCVLG…LAGLAQRFLE (216 aa). The G1 stretch occupies residues 23–30; the sequence is GHVDHGKT. Residue 23–30 participates in GTP binding; sequence GHVDHGKT. The tract at residues 48-52 is G2; that stretch reads GITQR. The tract at residues 84–87 is G3; sequence DTPG. Residues 84 to 88 and 138 to 141 each bind GTP; these read DTPGH and NKID. Residues 138-141 are G4; it reads NKID. Residues 206–208 form a G5 region; the sequence is SAK.

This sequence belongs to the TRAFAC class translation factor GTPase superfamily. Classic translation factor GTPase family. IF-2 subfamily.

Functionally, function in general translation initiation by promoting the binding of the formylmethionine-tRNA to ribosomes. Seems to function along with eIF-2. This chain is Probable translation initiation factor IF-2 (infB), found in Thermoplasma acidophilum (strain ATCC 25905 / DSM 1728 / JCM 9062 / NBRC 15155 / AMRC-C165).